The chain runs to 1378 residues: High molecular weight rhoptry protein 2 (1378 aa).

A signal peptide spans 1-19 (MIKVTIFLLLSIFSFNLYG). 2 disulfide bridges follow: cysteine 46–cysteine 71 and cysteine 233–cysteine 240. Residues 739-759 (FVYASYILGLVFFIESHIDIA) form a helical membrane-spanning segment. 3 disulfide bridges follow: cysteine 791–cysteine 851, cysteine 871–cysteine 912, and cysteine 947–cysteine 1034.

In terms of assembly, component of the RhopH complex. RhopH complex is composed of CLAG3.1/CLAG3.2, RhopH2 and RhopH3 with a 1:1:1 subunit stoichiometry. Interacts with CLAG3.1/CLAG3.2.

The protein resides in the host cell membrane. The protein localises to the parasitophorous vacuole membrane. Its subcellular location is the host cytoplasm. It is found in the cytoplasm. It localises to the cytoplasmic vesicle. The protein resides in the secretory vesicle. The protein localises to the rhoptry. Functionally, participates in the formation of new permeability pathways in Plasmodium-infected erythrocytes enabling the uptake of nutrients from the blood plasma. Required for maintaining invasion capacity of merozoites. Required for parasite growth and proliferation. This Plasmodium falciparum (isolate 3D7) protein is High molecular weight rhoptry protein 2.